Reading from the N-terminus, the 814-residue chain is Rho GTPase-activating protein 26 (814 aa).

A BAR domain is found at 7–262; that stretch reads EFSDCCLDSP…MKENPLEHKT (256 aa). In terms of domain architecture, PH spans 265–369; the sequence is PYTMEGYLYV…WMEAMDGREP (105 aa). In terms of domain architecture, Rho-GAP spans 383-568; it reads AQLDSIGFSI…ILIENHEKIF (186 aa). The span at 624 to 648 shows a compositional bias: low complexity; it reads LESVSSNPNSILNSSSSLQPNMNSS. The disordered stretch occupies residues 624 to 696; sequence LESVSSNPNS…MPTSSTSSDS (73 aa). Pro residues predominate over residues 662 to 672; it reads SLPPNPSPTSP. Residue Ser-668 is modified to Phosphoserine. Thr-670 is modified (phosphothreonine). At Ser-671 the chain carries Phosphoserine. Low complexity predominate over residues 673 to 696; sequence LSPSWPMFSAPSSPMPTSSTSSDS. Positions 756 to 814 constitute an SH3 domain; the sequence is TPFRKAKALYACKAEHDSELSFTAGTVFDNVHPSQEPGWLEGTLNGKTGLIPENYVEFL.

As to quaternary structure, interacts with NYAP1, NYAP2 and MYO16. Interacts with MICAL1 and WDR44. Binds to the C-terminus of PTK2/FAK1. In terms of assembly, (Microbial infection) Interacts with human parainfluenza virus type 2 proteins P and V. Phosphorylated in a PINK1-dependent fashion promoting retrograde mitochondrial trafficking and clustering.

Its subcellular location is the endosome membrane. The protein resides in the cytoplasm. The protein localises to the cell junction. It localises to the focal adhesion. It is found in the cytoskeleton. Its function is as follows. GTPase-activating protein for RHOA and CDC42. Facilitates mitochondrial quality control by promoting Parkin-mediated recruitment of autophagosomes to damaged mitochondria. Negatively regulates the growth of human parainfluenza virus type 2 by inhibiting hPIV-2-mediated RHOA activation via interaction with two of its viral proteins P and V. Functionally, associates with MICAL1 on the endosomal membrane to promote Rab8-Rab10-dependent tubule extension. After dissociation of MICAL1, recruits WDR44 which connects the endoplasmic reticulum (ER) with the endosomal tubule, thereby participating in the export of a subset of neosynthesized proteins. In Homo sapiens (Human), this protein is Rho GTPase-activating protein 26 (ARHGAP26).